Consider the following 577-residue polypeptide: Chaperonin CPN60-1, mitochondrial (577 aa).

Residues 1 to 34 constitute a mitochondrion transit peptide; that stretch reads MYRAAASLASKARQAGNSLATRQVGSRLAWSRNY.

The protein belongs to the chaperonin (HSP60) family.

The protein resides in the mitochondrion. Implicated in mitochondrial protein import and macromolecular assembly. May facilitate the correct folding of imported proteins. May also prevent misfolding and promote the refolding and proper assembly of unfolded polypeptides generated under stress conditions in the mitochondrial matrix. The protein is Chaperonin CPN60-1, mitochondrial (CPN60I) of Zea mays (Maize).